A 161-amino-acid chain; its full sequence is Globin CTT-VIIB-5/CTT-VIIB-9 (161 aa).

The N-terminal stretch at 1–16 is a signal peptide; it reads MKFFAVLALCIVGAIA. The 144-residue stretch at 18-161 folds into the Globin domain; it reads PLTADEASLV…NTFAIVVPRL (144 aa). The heme b site is built by His-76 and His-111.

It belongs to the globin family. In terms of assembly, homodimer.

The polypeptide is Globin CTT-VIIB-5/CTT-VIIB-9 (CTT-7B5) (Chironomus thummi thummi (Midge)).